The chain runs to 232 residues: Imidazole glycerol phosphate synthase subunit HisF (232 aa).

Residues D11 and D130 contribute to the active site.

Belongs to the HisA/HisF family. Heterodimer of HisH and HisF.

The protein localises to the cytoplasm. It carries out the reaction 5-[(5-phospho-1-deoxy-D-ribulos-1-ylimino)methylamino]-1-(5-phospho-beta-D-ribosyl)imidazole-4-carboxamide + L-glutamine = D-erythro-1-(imidazol-4-yl)glycerol 3-phosphate + 5-amino-1-(5-phospho-beta-D-ribosyl)imidazole-4-carboxamide + L-glutamate + H(+). It functions in the pathway amino-acid biosynthesis; L-histidine biosynthesis; L-histidine from 5-phospho-alpha-D-ribose 1-diphosphate: step 5/9. IGPS catalyzes the conversion of PRFAR and glutamine to IGP, AICAR and glutamate. The HisF subunit catalyzes the cyclization activity that produces IGP and AICAR from PRFAR using the ammonia provided by the HisH subunit. The chain is Imidazole glycerol phosphate synthase subunit HisF from Listeria monocytogenes serotype 4a (strain HCC23).